We begin with the raw amino-acid sequence, 136 residues long: Ig heavy chain V-A2 region P-MU-3 (136 aa).

A signal peptide spans 1-19 (METGLRWLLLVAVLKGVQC). Gln20 is subject to Pyrrolidone carboxylic acid. An Ig-like domain is found at 20–127 (QSVKESEGGL…ENEFFNAIWG (108 aa)).

The sequence is that of Ig heavy chain V-A2 region P-MU-3 from Oryctolagus cuniculus (Rabbit).